A 234-amino-acid chain; its full sequence is Ubiquinone biosynthesis O-methyltransferase (234 aa).

The S-adenosyl-L-methionine site is built by Arg-40, Gly-59, Asp-80, and Met-123.

Belongs to the methyltransferase superfamily. UbiG/COQ3 family.

The enzyme catalyses a 3-demethylubiquinol + S-adenosyl-L-methionine = a ubiquinol + S-adenosyl-L-homocysteine + H(+). The catalysed reaction is a 3-(all-trans-polyprenyl)benzene-1,2-diol + S-adenosyl-L-methionine = a 2-methoxy-6-(all-trans-polyprenyl)phenol + S-adenosyl-L-homocysteine + H(+). The protein operates within cofactor biosynthesis; ubiquinone biosynthesis. In terms of biological role, O-methyltransferase that catalyzes the 2 O-methylation steps in the ubiquinone biosynthetic pathway. In Coxiella burnetii (strain CbuG_Q212) (Coxiella burnetii (strain Q212)), this protein is Ubiquinone biosynthesis O-methyltransferase.